The following is a 153-amino-acid chain: Ribosome maturation factor RimP (153 aa).

Belongs to the RimP family.

It localises to the cytoplasm. Required for maturation of 30S ribosomal subunits. In Picosynechococcus sp. (strain ATCC 27264 / PCC 7002 / PR-6) (Agmenellum quadruplicatum), this protein is Ribosome maturation factor RimP.